The sequence spans 261 residues: Cytochrome c oxidase subunit 3 (261 aa).

The Mitochondrial matrix portion of the chain corresponds to Met-1–Pro-15. A helical membrane pass occupies residues Trp-16 to Trp-34. The Mitochondrial intermembrane portion of the chain corresponds to Phe-35 to Met-40. Residues Thr-41–Thr-66 form a helical membrane-spanning segment. The Mitochondrial matrix segment spans residues Phe-67–Thr-72. The helical transmembrane segment at Pro-73 to Ser-105 threads the bilayer. Over Leu-106–Glu-128 the chain is Mitochondrial intermembrane. Residues Val-129–Met-152 form a helical membrane-spanning segment. Topologically, residues Glu-153 to Glu-155 are mitochondrial matrix. Residues Arg-156–Glu-183 form a helical membrane-spanning segment. At Ala-184–Asp-190 the chain is on the mitochondrial intermembrane side. A helical membrane pass occupies residues Gly-191 to Val-223. The Mitochondrial matrix segment spans residues Leu-224 to His-232. The helical transmembrane segment at Phe-233–Ile-256 threads the bilayer. The Mitochondrial intermembrane segment spans residues Tyr-257–Ser-261.

Belongs to the cytochrome c oxidase subunit 3 family. In terms of assembly, component of the cytochrome c oxidase (complex IV, CIV), a multisubunit enzyme composed of 14 subunits. The complex is composed of a catalytic core of 3 subunits MT-CO1, MT-CO2 and MT-CO3, encoded in the mitochondrial DNA, and 11 supernumerary subunits COX4I, COX5A, COX5B, COX6A, COX6B, COX6C, COX7A, COX7B, COX7C, COX8 and NDUFA4, which are encoded in the nuclear genome. The complex exists as a monomer or a dimer and forms supercomplexes (SCs) in the inner mitochondrial membrane with NADH-ubiquinone oxidoreductase (complex I, CI) and ubiquinol-cytochrome c oxidoreductase (cytochrome b-c1 complex, complex III, CIII), resulting in different assemblies (supercomplex SCI(1)III(2)IV(1) and megacomplex MCI(2)III(2)IV(2)).

The protein localises to the mitochondrion inner membrane. The catalysed reaction is 4 Fe(II)-[cytochrome c] + O2 + 8 H(+)(in) = 4 Fe(III)-[cytochrome c] + 2 H2O + 4 H(+)(out). Functionally, component of the cytochrome c oxidase, the last enzyme in the mitochondrial electron transport chain which drives oxidative phosphorylation. The respiratory chain contains 3 multisubunit complexes succinate dehydrogenase (complex II, CII), ubiquinol-cytochrome c oxidoreductase (cytochrome b-c1 complex, complex III, CIII) and cytochrome c oxidase (complex IV, CIV), that cooperate to transfer electrons derived from NADH and succinate to molecular oxygen, creating an electrochemical gradient over the inner membrane that drives transmembrane transport and the ATP synthase. Cytochrome c oxidase is the component of the respiratory chain that catalyzes the reduction of oxygen to water. Electrons originating from reduced cytochrome c in the intermembrane space (IMS) are transferred via the dinuclear copper A center (CU(A)) of subunit 2 and heme A of subunit 1 to the active site in subunit 1, a binuclear center (BNC) formed by heme A3 and copper B (CU(B)). The BNC reduces molecular oxygen to 2 water molecules using 4 electrons from cytochrome c in the IMS and 4 protons from the mitochondrial matrix. In Danio rerio (Zebrafish), this protein is Cytochrome c oxidase subunit 3 (mt-co3).